The primary structure comprises 208 residues: ATP-dependent Clp protease proteolytic subunit (208 aa).

Serine 111 functions as the Nucleophile in the catalytic mechanism. Histidine 136 is an active-site residue.

It belongs to the peptidase S14 family. In terms of assembly, fourteen ClpP subunits assemble into 2 heptameric rings which stack back to back to give a disk-like structure with a central cavity, resembling the structure of eukaryotic proteasomes.

The protein resides in the cytoplasm. The catalysed reaction is Hydrolysis of proteins to small peptides in the presence of ATP and magnesium. alpha-casein is the usual test substrate. In the absence of ATP, only oligopeptides shorter than five residues are hydrolyzed (such as succinyl-Leu-Tyr-|-NHMec, and Leu-Tyr-Leu-|-Tyr-Trp, in which cleavage of the -Tyr-|-Leu- and -Tyr-|-Trp bonds also occurs).. Its function is as follows. Cleaves peptides in various proteins in a process that requires ATP hydrolysis. Has a chymotrypsin-like activity. Plays a major role in the degradation of misfolded proteins. This Vibrio campbellii (strain ATCC BAA-1116) protein is ATP-dependent Clp protease proteolytic subunit.